The sequence spans 438 residues: Flotillin-2 (438 aa).

The protein belongs to the band 7/mec-2 family. Flotillin subfamily. Heterooligomeric complex of flotillins 1 and 2.

Its subcellular location is the membrane. Its function is as follows. May play a role in axon growth and regeneration. May be involved in epidermal cell adhesion and epidermal structure and function. The protein is Flotillin-2 of Drosophila melanogaster (Fruit fly).